We begin with the raw amino-acid sequence, 102 residues long: Small ribosomal subunit protein uS10 (102 aa).

The disordered stretch occupies residues 34–58; it reads VSGPVPLPTKTLEVPSRKSPDGEGT.

This sequence belongs to the universal ribosomal protein uS10 family. Part of the 30S ribosomal subunit.

Functionally, involved in the binding of tRNA to the ribosomes. The sequence is that of Small ribosomal subunit protein uS10 from Halobacterium salinarum (strain ATCC 29341 / DSM 671 / R1).